The chain runs to 248 residues: Exosome complex component Rrp41 (248 aa).

Belongs to the RNase PH family. Rrp41 subfamily. In terms of assembly, component of the archaeal exosome complex. Forms a hexameric ring-like arrangement composed of 3 Rrp41-Rrp42 heterodimers. The hexameric ring associates with a trimer of Rrp4 and/or Csl4 subunits.

The protein localises to the cytoplasm. In terms of biological role, catalytic component of the exosome, which is a complex involved in RNA degradation. Has 3'-&gt;5' exoribonuclease activity. Can also synthesize heteromeric RNA-tails. In Thermoplasma acidophilum (strain ATCC 25905 / DSM 1728 / JCM 9062 / NBRC 15155 / AMRC-C165), this protein is Exosome complex component Rrp41.